Here is a 199-residue protein sequence, read N- to C-terminus: MEILLATTNLHKIREFKEMCKAFAHLEILSLHQFPAYMCPEEVGTNFKENAISKAEHAAKHLNRWVLADDSGLVVPRLSGKPGIYSRRFAGLEATDEENRKKLLLEMRQLINKEDRTAYYECCLALSSPTGLQKCVQGICEGFILNEARGRNGFGYDSLFVKNDYEKSFAEIDEAVKNRISHRRKAFERLSAFLENLRD.

Residue 7–12 (TTNLHK) participates in substrate binding. E41 and D70 together coordinate Mg(2+). The active-site Proton acceptor is the D70. Residues S71, 154-157 (FGYD), K177, and 182-183 (HR) contribute to the substrate site.

This sequence belongs to the HAM1 NTPase family. In terms of assembly, homodimer. Mg(2+) serves as cofactor.

It carries out the reaction XTP + H2O = XMP + diphosphate + H(+). The catalysed reaction is dITP + H2O = dIMP + diphosphate + H(+). It catalyses the reaction ITP + H2O = IMP + diphosphate + H(+). Its function is as follows. Pyrophosphatase that catalyzes the hydrolysis of nucleoside triphosphates to their monophosphate derivatives, with a high preference for the non-canonical purine nucleotides XTP (xanthosine triphosphate), dITP (deoxyinosine triphosphate) and ITP. Seems to function as a house-cleaning enzyme that removes non-canonical purine nucleotides from the nucleotide pool, thus preventing their incorporation into DNA/RNA and avoiding chromosomal lesions. The protein is dITP/XTP pyrophosphatase of Protochlamydia amoebophila (strain UWE25).